Consider the following 328-residue polypeptide: 6-phosphogluconolactonase (328 aa).

This sequence belongs to the cycloisomerase 2 family.

It carries out the reaction 6-phospho-D-glucono-1,5-lactone + H2O = 6-phospho-D-gluconate + H(+). Its pathway is carbohydrate degradation; pentose phosphate pathway; D-ribulose 5-phosphate from D-glucose 6-phosphate (oxidative stage): step 2/3. Functionally, catalyzes the hydrolysis of 6-phosphogluconolactone to 6-phosphogluconate. The polypeptide is 6-phosphogluconolactonase (Xenorhabdus nematophila (strain ATCC 19061 / DSM 3370 / CCUG 14189 / LMG 1036 / NCIMB 9965 / AN6)).